A 312-amino-acid chain; its full sequence is MTKLSTTKICVKSPAKINLHLEIIGKREDGYHELAMIMQNIDLFDYIEFENNQIGDIELKSNNKDLSLKDDNLIIKAANYVKDISKKKDLGANIFLKKNIPIGAGLAGGSSNAAATIIGLNKLWDLDLDNETMLSLSSKLGSDVPFFINGGCQFCFGRGEILENYNSKFDYGVILLKNPNISISTADTYKKYSKEYCSNFLTESEKTNDIRNDLRINGFNDLNSSNQIIKVKNDLQIIVEKENDSVKKALYLLSNLQNCLSFSMSGSGPTCFALFKDINKANEVFEQNHKMFNNNGFEAWVCKLINSGITFL.

Lysine 16 is a catalytic residue. 101 to 111 provides a ligand contact to ATP; it reads PIGAGLAGGSS. Aspartate 143 is an active-site residue.

The protein belongs to the GHMP kinase family. IspE subfamily.

The enzyme catalyses 4-CDP-2-C-methyl-D-erythritol + ATP = 4-CDP-2-C-methyl-D-erythritol 2-phosphate + ADP + H(+). It functions in the pathway isoprenoid biosynthesis; isopentenyl diphosphate biosynthesis via DXP pathway; isopentenyl diphosphate from 1-deoxy-D-xylulose 5-phosphate: step 3/6. Functionally, catalyzes the phosphorylation of the position 2 hydroxy group of 4-diphosphocytidyl-2C-methyl-D-erythritol. The sequence is that of 4-diphosphocytidyl-2-C-methyl-D-erythritol kinase from Prochlorococcus marinus (strain MIT 9515).